A 113-amino-acid polypeptide reads, in one-letter code: Class I hydrophobin POH3 (113 aa).

The signal sequence occupies residues 1 to 21; the sequence is MFSRVIFCTFLILPLLAAATA. 4 cysteine pairs are disulfide-bonded: C32/C92, C39/C86, C40/C73, and C93/C106. Residue N110 is glycosylated (N-linked (GlcNAc...) asparagine).

Belongs to the fungal hydrophobin family. As to quaternary structure, self-assembles to form functional amyloid fibrils called rodlets. Self-assembly into fibrillar rodlets occurs spontaneously at hydrophobic:hydrophilic interfaces and the rodlets further associate laterally to form amphipathic monolayers. Expressionn is switched off in the fruiting bodies but abundantly expressed in the vegetative mycelium of both monokaryon and dikaryon.

It localises to the secreted. Its subcellular location is the cell wall. Functionally, aerial growth, conidiation, and dispersal of filamentous fungi in the environment rely upon a capability of their secreting small amphipathic proteins called hydrophobins (HPBs) with low sequence identity. Class I can self-assemble into an outermost layer of rodlet bundles on aerial cell surfaces, conferring cellular hydrophobicity that supports fungal growth, development and dispersal; whereas Class II form highly ordered films at water-air interfaces through intermolecular interactions but contribute nothing to the rodlet structure. POH3 is a class I hydrophobin that causes a large drop in the water-surface tension, enabling hyphae to breach the interface and grow into the air, in both the primary and the secondary mycelium. In the latter mycelium POH3 maight also play a role in the emergence of fruiting bodies. Secreted POH3 could also play a role in facilitating lignin degradation. The sequence is that of Class I hydrophobin POH3 from Pleurotus ostreatus (Oyster mushroom).